The primary structure comprises 1005 residues: Mitogen-activated protein kinase kinase kinase 10 (1005 aa).

Residues 32–96 form the SH3 domain; it reads VSNPLWMAVF…PSNYVVSDDK (65 aa). Residues 118–380 form the Protein kinase domain; it reads LNLDEIIGVG…SCILEQLTTI (263 aa). ATP contacts are provided by residues 124 to 132 and lysine 145; that span reads IGVGGFGKV. Aspartate 242 serves as the catalytic Proton acceptor. Leucine-zipper stretches follow at residues 404 to 425 and 439 to 460; these read IQQM…EEEL and LKRR…ELNI. Disordered stretches follow at residues 551-611, 647-676, 712-736, and 758-940; these read SVLK…KHTP, QSDH…QSRR, FQWA…GEDS, and RSLI…AEGA. Composition is skewed to basic and acidic residues over residues 576–588 and 648–658; these read QKER…RLKT and SDHRSHPEDTA. Composition is skewed to basic and acidic residues over residues 761-786 and 799-809; these read IRSD…EDRG and YKVESFKRDPK. The segment covering 810–826 has biased composition (polar residues); that stretch reads QSLTPTHVTVGRNNTTE. Over residues 862–879 the composition is skewed to pro residues; sequence EPSPFPRLPDPHFVFPPP. The span at 915–940 shows a compositional bias: low complexity; sequence SLSQTHSSSPSSGGGDACSSGSAEGA.

Belongs to the protein kinase superfamily. STE Ser/Thr protein kinase family. MAP kinase kinase kinase subfamily. As to quaternary structure, homodimer. Binds to the GTPase rac1 but not cdc42 or rhoA. Interacts (via kinase domain) with pak1 (via kinase domain). Interacts with the ubiquitin-conjugating enzyme ube2d4. The cofactor is Mg(2+). Autophosphorylation on serine and threonine residues within the activation loop plays a role in enzyme activation. In terms of processing, mono- and poly-ubiquitinated. In terms of tissue distribution, in adults, strongly expressed in the brain and spleen with lower levels in pancreas, heart, muscle and kidney (at protein level). In the developing embryo, expressed at stage 22 in the cement gland. Weakly expressed in the pronephros from stage 24 or 25, with expression increasing in strength by stage 30 and continuing at least until stage 37. Expression in the developing pronephros correlates with epithelialization of the proximal pronephric tubules.

It catalyses the reaction L-seryl-[protein] + ATP = O-phospho-L-seryl-[protein] + ADP + H(+). It carries out the reaction L-threonyl-[protein] + ATP = O-phospho-L-threonyl-[protein] + ADP + H(+). Homodimerization via the leucine zipper domains is required for autophosphorylation and subsequent activation. Its function is as follows. Activates the JUN N-terminal pathway. Essential for pronephros and cement gland development. This is Mitogen-activated protein kinase kinase kinase 10 (map3k10) from Xenopus laevis (African clawed frog).